A 206-amino-acid chain; its full sequence is Small ribosomal subunit protein uS4 (206 aa).

The interval 28–52 (YLDRRPYAPGQHGQRRGRGRPSDYS) is disordered. An S4 RNA-binding domain is found at 96–171 (RRLDNVVFRM…QKRRRVSPWI (76 aa)).

It belongs to the universal ribosomal protein uS4 family. In terms of assembly, part of the 30S ribosomal subunit. Contacts protein S5. The interaction surface between S4 and S5 is involved in control of translational fidelity.

In terms of biological role, one of the primary rRNA binding proteins, it binds directly to 16S rRNA where it nucleates assembly of the body of the 30S subunit. With S5 and S12 plays an important role in translational accuracy. The polypeptide is Small ribosomal subunit protein uS4 (Deinococcus geothermalis (strain DSM 11300 / CIP 105573 / AG-3a)).